The chain runs to 340 residues: Sideroflexin-5 (340 aa).

Helical transmembrane passes span Ile103–Leu123, Phe163–Val183, Leu254–Leu274, and Leu287–Ile307.

It belongs to the sideroflexin family. As to expression, primarily expressed in the brain.

It is found in the mitochondrion inner membrane. The enzyme catalyses citrate(in) = citrate(out). Mitochondrial amino-acid transporter. Transports citrate. Does not act as a serine transporter: not able to mediate transport of serine into mitochondria. In brown adipose tissue, plays a role in the regulation of UCP1-dependent thermogenesis probably by supporting mitochondrial glycerol-3-phosphate utilization. The polypeptide is Sideroflexin-5 (Homo sapiens (Human)).